We begin with the raw amino-acid sequence, 401 residues long: Cysteine desulfurase (401 aa).

Residues 72–73 (AT), asparagine 151, glutamine 179, and 199–201 (SAH) contribute to the pyridoxal 5'-phosphate site. Lysine 202 is subject to N6-(pyridoxal phosphate)lysine. Threonine 237 contacts pyridoxal 5'-phosphate. Cysteine 324 (cysteine persulfide intermediate) is an active-site residue. Cysteine 324 is a [2Fe-2S] cluster binding site.

This sequence belongs to the class-V pyridoxal-phosphate-dependent aminotransferase family. NifS/IscS subfamily. In terms of assembly, homodimer. It depends on pyridoxal 5'-phosphate as a cofactor.

The catalysed reaction is (sulfur carrier)-H + L-cysteine = (sulfur carrier)-SH + L-alanine. In terms of biological role, catalyzes the removal of elemental sulfur atoms from cysteine to produce alanine. Seems to participate in the biosynthesis of the nitrogenase metalloclusters by providing the inorganic sulfur required for the Fe-S core formation. The protein is Cysteine desulfurase of Enterobacter agglomerans (Erwinia herbicola).